Reading from the N-terminus, the 488-residue chain is MTGEKIRSVRKERKSGLDLLEPDEEPAATGPAKHRGSKIFSGGNHRISRSSSSPGDPDGAYPVHECVFRGDVRRLSSLIRTQNIAQKDVHGNTPLHLAVMMGHKECAHLLLAHNAPVKVKNAQGWSPLAEAISYGDRQMITALLRKLKQQSRESVEDKRPRLLKALKELGDFYLELHWDFQSWVPLLSRILPSDACKIYKQGINIRLDTTLIDFTDMKCQRGDLSFIFCGDAPPSESFVVLDNEQKVYQRIHHEESEMETEEEVDILMSSDVYSATLSTKSITFSRAQTGWLFREDKTERVGNFLADFYMVNGLVLESRKRREHLSEEDILRNKAIMESFSKGGSLIEQNFEPMRRQSLTPPSPNTISWEEYITAETGKAPHLGRELVCKESKKNFKATVAMSPDFPLGIESLLNVLEVIAPFKHFNKLREFVQMKLPPGFPVKLDIPVFPTITATVTFQEFRYDEFDESIFTIPSDYKGDPSRFPDL.

Positions 1–60 (MTGEKIRSVRKERKSGLDLLEPDEEPAATGPAKHRGSKIFSGGNHRISRSSSSPGDPDGA) are disordered. Residues 41–59 (SGGNHRISRSSSSPGDPDG) show a composition bias toward low complexity. ANK repeat units follow at residues 58–87 (DGAY…IAQK), 90–119 (HGNT…PVKV), and 123–152 (QGWS…QQSR).

Its subcellular location is the endoplasmic reticulum membrane. Acts as a molecular chaperone for G protein-coupled receptors, regulating their biogenesis and exit from the ER. In Danio rerio (Zebrafish), this protein is Ankyrin repeat domain-containing protein 13C (ankrd13c).